We begin with the raw amino-acid sequence, 96 residues long: (4S)-4-hydroxy-5-phosphonooxypentane-2,3-dione isomerase (96 aa).

An ABM domain is found at H2–F91.

It belongs to the LsrG family. As to quaternary structure, homodimer.

It is found in the cytoplasm. It carries out the reaction (2S)-2-hydroxy-3,4-dioxopentyl phosphate = 3-hydroxy-2,4-dioxopentyl phosphate. In terms of biological role, involved in the degradation of phospho-AI-2, thereby terminating induction of the lsr operon and closing the AI-2 signaling cycle. Catalyzes the conversion of (4S)-4-hydroxy-5-phosphonooxypentane-2,3-dione (P-DPD) to 3-hydroxy-5-phosphonooxypentane-2,4-dione (P-HPD). The chain is (4S)-4-hydroxy-5-phosphonooxypentane-2,3-dione isomerase from Escherichia coli O9:H4 (strain HS).